The following is a 453-amino-acid chain: MSKISEAVKRARAAFSSGRTRPLQFRIQQLEALQRLIQEQEQELVGALAADLHKNEWNAYYEEVVYVLEEIEYMIQKLPEWAADEPVEKTPQTQQDELYIHSEPLGVVLVIGTWNYPFNLTIQPMVGAIAAGNSVVLKPSELSENMASLLATIIPQYLDKDLYPVINGGVPETTELLKERFDHILYTGSTGVGKIIMTAAAKHLTPVTLELGGKSPCYVDKNCDLDVACRRIAWGKFMNSGQTCVAPDYILCDPSIQNQIVEKLKKSLKEFYGEDAKKSRDYGRIISARHFQRVMGLIEGQKVAYGGTGDAATRYIAPTILTDVDPQSPVMQEEIFGPVLPIVCVRSLEEAIQFINQREKPLALYMFSSNDKVIKKMIAETSSGGVAANDVIVHITLHSLPFGGVGNSGMGSYHGKKSFETFSHRRSCLVRPLMNDEGLKVRYPPSPAKMTQH.

N-acetylserine is present on Ser2. Lys178 is modified (N6-acetyllysine). 188-193 (GSTGVG) is an NAD(+) binding site. At Lys194 the chain carries N6-acetyllysine. Catalysis depends on residues Glu210 and Cys244.

The protein belongs to the aldehyde dehydrogenase family. Homodimer. As to expression, high levels in stomach, esophagus and lung; low level in the liver and kidney.

The protein resides in the cytoplasm. It catalyses the reaction an aldehyde + NAD(+) + H2O = a carboxylate + NADH + 2 H(+). The enzyme catalyses octanal + NAD(+) + H2O = octanoate + NADH + 2 H(+). ALDHs play a major role in the detoxification of alcohol-derived acetaldehyde. They are involved in the metabolism of corticosteroids, biogenic amines, neurotransmitters, and lipid peroxidation. Oxidizes medium and long chain aldehydes into non-toxic fatty acids. Preferentially oxidizes aromatic aldehyde substrates. Comprises about 50 percent of corneal epithelial soluble proteins. May play a role in preventing corneal damage caused by ultraviolet light. The protein is Aldehyde dehydrogenase, dimeric NADP-preferring (ALDH3A1) of Homo sapiens (Human).